Reading from the N-terminus, the 684-residue chain is ATP-dependent zinc metalloprotease FtsH (684 aa).

Residues 1 to 21 (MENKNDMFNKTPKSGKPKMFR) lie on the Cytoplasmic side of the membrane. A helical membrane pass occupies residues 22 to 42 (FNLYWMYGLIFIMLVALYMTN). At 43 to 138 (DSSGTKELGW…QVRFEEGDDA (96 aa)) the chain is on the periplasmic side. A helical membrane pass occupies residues 139–159 (IWNFLVSFGPIILLIGVWMFL). Topologically, residues 160–684 (MRRMSGGTGA…TEENKTGKIA (525 aa)) are cytoplasmic. Position 236–243 (236–243 (GPPGTGKT)) interacts with ATP. Histidine 459 lines the Zn(2+) pocket. The active site involves glutamate 460. Zn(2+)-binding residues include histidine 463 and aspartate 534. Residues 647–662 (EKANGKNKENADKEAE) show a composition bias toward basic and acidic residues. Positions 647–684 (EKANGKNKENADKEAEADATTENVTDTPTEENKTGKIA) are disordered.

This sequence in the central section; belongs to the AAA ATPase family. The protein in the C-terminal section; belongs to the peptidase M41 family. As to quaternary structure, homohexamer. Zn(2+) is required as a cofactor.

The protein localises to the cell inner membrane. Functionally, acts as a processive, ATP-dependent zinc metallopeptidase for both cytoplasmic and membrane proteins. Plays a role in the quality control of integral membrane proteins. The protein is ATP-dependent zinc metalloprotease FtsH of Parabacteroides distasonis (strain ATCC 8503 / DSM 20701 / CIP 104284 / JCM 5825 / NCTC 11152).